A 447-amino-acid chain; its full sequence is Probable protein phosphatase 2C 71 (447 aa).

The 247-residue stretch at Ser-33–Phe-279 folds into the PPM-type phosphatase domain. 4 residues coordinate Mn(2+): Asp-69, Gly-70, Asp-231, and Asp-270. Low complexity predominate over residues Ser-284–Asn-297. Positions Ser-284 to Asn-447 are disordered. Residues Asn-305–Thr-331 show a composition bias toward basic and acidic residues. Polar residues-rich tracts occupy residues Ala-346 to Lys-374 and Lys-392 to Gly-423. Over residues Glu-424 to Ala-438 the composition is skewed to basic and acidic residues.

It belongs to the PP2C family. Requires Mg(2+) as cofactor. It depends on Mn(2+) as a cofactor.

It carries out the reaction O-phospho-L-seryl-[protein] + H2O = L-seryl-[protein] + phosphate. The catalysed reaction is O-phospho-L-threonyl-[protein] + H2O = L-threonyl-[protein] + phosphate. This is Probable protein phosphatase 2C 71 from Arabidopsis thaliana (Mouse-ear cress).